We begin with the raw amino-acid sequence, 543 residues long: Zinc finger protein 34 (543 aa).

Residues 14-87 form the KRAB domain; it reads VTFEDVAVFL…DMHGAEQPSV (74 aa). The disordered stretch occupies residues 84-151; that stretch reads QPSVDGSAHG…PGEQRGPRLV (68 aa). Basic and acidic residues predominate over residues 124–147; sequence EPGEVHERVREPEGRLDRPGEQRG. 12 C2H2-type zinc fingers span residues 179 to 201, 234 to 256, 262 to 284, 290 to 312, 318 to 340, 346 to 368, 374 to 396, 402 to 424, 430 to 452, 458 to 480, 486 to 508, and 514 to 536; these read HKCD…KRVH, YYCG…QRLH, YKCE…RRMH, YRCD…QRIH, YKCS…QRIH, YKCS…RRTH, YECK…QRIH, YKCN…QRSH, YECN…QRIH, YKCS…QRSH, YKCA…RRIH, and YTCG…QRIH.

It belongs to the krueppel C2H2-type zinc-finger protein family.

The protein resides in the nucleus. In terms of biological role, may be involved in transcriptional regulation. This chain is Zinc finger protein 34 (ZNF34), found in Bos taurus (Bovine).